The chain runs to 59 residues: Small integral membrane protein 30 (59 aa).

Positions methionine 1–alanine 24 are cleaved as a signal peptide. The Extracellular portion of the chain corresponds to valine 25–aspartate 29. A helical membrane pass occupies residues alanine 30–isoleucine 50. Residues tyrosine 51–methionine 59 are Cytoplasmic-facing.

In terms of assembly, interacts (via transmembrane domain) with antiviral protein MAVS (via transmembrane domain); the interaction disrupts MAVS interaction with RIGI and inhibits MAVS aggregation, resulting in the repression of type I interferon signaling and innate immune responses.

Its subcellular location is the endoplasmic reticulum membrane. It is found in the mitochondrion membrane. In terms of biological role, negatively regulates antiviral innate immune responses. Disrupts the interaction of antiviral protein MAVS with innate immune receptor RIGI and inhibits MAVS aggregation, resulting in the repression of type I interferon signaling and innate immune responses. The chain is Small integral membrane protein 30 from Mus musculus (Mouse).